We begin with the raw amino-acid sequence, 310 residues long: GPN-loop GTPase 2 (310 aa).

The residue at position 2 (alanine 2) is an N-acetylalanine. GTP is bound at residue 19 to 24 (GSGKTT). The Gly-Pro-Asn (GPN)-loop; involved in dimer interface signature appears at 76 to 78 (GPN). 178-181 (SKMD) is a binding site for GTP.

This sequence belongs to the GPN-loop GTPase family. Heterodimers with GPN1 or GPN3. Binds to RNA polymerase II (RNAPII).

Functionally, small GTPase required for proper localization of RNA polymerase II and III (RNAPII and RNAPIII). May act at an RNAP assembly step prior to nuclear import. This Sus scrofa (Pig) protein is GPN-loop GTPase 2.